The following is a 121-amino-acid chain: uncharacterized protein (121 aa).

A run of 3 helical transmembrane segments spans residues 12–32 (MIGI…HPGV), 35–55 (VIQP…FGGL), and 67–87 (VFVV…YVGD).

This sequence belongs to the sbp family.

The protein localises to the cell membrane. This is an uncharacterized protein from Mycobacterium bovis (strain ATCC BAA-935 / AF2122/97).